A 592-amino-acid chain; its full sequence is Elongation factor 1 alpha-like protein (592 aa).

Disordered stretches follow at residues 1–35 (MSRH…EEFR) and 78–159 (SSKA…KQNP). Over residues 12-32 (LDDYELDEEPGEEELTEEQEE) the composition is skewed to acidic residues. Basic and acidic residues predominate over residues 82–111 (GAKEKQNTDSQKEKKQNKSKEALADAKDPL). Positions 113–124 (ESSNGIKNLSLN) are enriched in polar residues. The segment covering 137–151 (VKMKNSSESDNQPEK) has biased composition (basic and acidic residues). One can recognise a tr-type G domain in the interval 175-401 (KPVVHLVVTG…DQLVPPEKPY (227 aa)). Residues 184-191 (GHVDSGKS) are G1. 184–191 (GHVDSGKS) is a binding site for GTP. Positions 240-244 (GVTMD) are G2. The segment at 261–264 (DAPG) is G3. GTP-binding positions include 323 to 326 (NKLD) and 352 to 355 (FKTS). Residues 323–326 (NKLD) are G4. The G5 stretch occupies residues 363–365 (SAI).

It belongs to the TRAFAC class translation factor GTPase superfamily. Classic translation factor GTPase family. Component of the Dom34-Hbs1 complex, also named Pelota-HBS1L complex, composed of dom34 and hbs1.

The protein localises to the cytoplasm. The enzyme catalyses GTP + H2O = GDP + phosphate + H(+). Functionally, GTPase component of the Dom34-Hbs1 complex, a complex that recognizes stalled ribosomes and triggers the No-Go Decay (NGD) pathway. The Dom34-Hbs1 complex recognizes ribosomes stalled at the 3' end of an mRNA and engages stalled ribosomes by destabilizing mRNA in the mRNA channel. Following ribosome-binding, the Pelota-HBS1L complex promotes the disassembly of stalled ribosomes, followed by degradation of damaged mRNAs as part of the NGD pathway. The protein is Elongation factor 1 alpha-like protein of Schizosaccharomyces pombe (strain 972 / ATCC 24843) (Fission yeast).